We begin with the raw amino-acid sequence, 127 residues long: Protein ApaG (127 aa).

The region spanning 3–127 is the ApaG domain; it reads KSETYRIEVE…FMLAMPRVLH (125 aa).

The sequence is that of Protein ApaG from Azoarcus sp. (strain BH72).